Consider the following 170-residue polypeptide: Cysteine-rich uncharacterized protein 241L (170 aa).

This is Cysteine-rich uncharacterized protein 241L from Acheta domesticus (House cricket).